The sequence spans 311 residues: Ribosomal protein L11 methyltransferase (311 aa).

4 residues coordinate S-adenosyl-L-methionine: Thr-162, Gly-183, Asp-205, and Asn-248.

Belongs to the methyltransferase superfamily. PrmA family.

It is found in the cytoplasm. It catalyses the reaction L-lysyl-[protein] + 3 S-adenosyl-L-methionine = N(6),N(6),N(6)-trimethyl-L-lysyl-[protein] + 3 S-adenosyl-L-homocysteine + 3 H(+). Its function is as follows. Methylates ribosomal protein L11. This chain is Ribosomal protein L11 methyltransferase, found in Bacillus subtilis (strain 168).